The primary structure comprises 545 residues: MSEFLRIAMAQFDFPVGAVAQNAERIIALIEQARDEHGADVVMFPELALSGYPPEDLLLRPGFLAHCQVAIERIAAATHGIVAVVGWPQSAGSVVYNVASVLCDGQVEQTYRKRELPNYAVFDERRYFEVDPNGSRCVFKVKGVPVGVLICEDLWFSEPLADTVCGGAELVLVPNASPYERGKHAQRDALLAERARETGAAIAYLNVVGGQDALVFDGASVVVDGHGRVHPAAAAFSDQWLVVDYMRSERRFVPLQWVAESEVSINALVWRAVVRGVQDYCRKNGFSKVWVGLSGGIDSALVLAIAVDALGADQVTAVRLPSRYTAELSNDLAAEQCHSLGVRLETVAIEPVFEGLLAALGPLFAGMAPDATEENLQSRSRGVILMALANKFGGLLLTTGNKSEYAVGYATIYGDMCGGYAPLKDIYKSQVFELAQWRNTVSDVLAIPPGVIHRPPSAELRAQQTDQDSLPPYEVLDGILSLYVDQEQSREDIIAAGYAAGVVDYVLNLVKINEWKRHQAAPGPKVSQRAFGRERRYPISNAYRG.

The CN hydrolase domain occupies 5 to 247 (LRIAMAQFDF…DQWLVVDYMR (243 aa)). The active-site Proton acceptor; for glutaminase activity is glutamate 46. Lysine 113 acts as the For glutaminase activity in catalysis. Tyrosine 119 contributes to the L-glutamine binding site. Cysteine 151 (nucleophile; for glutaminase activity) is an active-site residue. L-glutamine-binding residues include serine 177 and lysine 183. The tract at residues 269 to 545 (VWRAVVRGVQ…RYPISNAYRG (277 aa)) is ligase. Residue 292 to 299 (GLSGGIDS) coordinates ATP. Asparagine 375 contacts deamido-NAD(+). Residue threonine 399 coordinates ATP. Residues glutamate 404 and lysine 516 each coordinate deamido-NAD(+).

In the C-terminal section; belongs to the NAD synthetase family.

It carries out the reaction deamido-NAD(+) + L-glutamine + ATP + H2O = L-glutamate + AMP + diphosphate + NAD(+) + H(+). Its pathway is cofactor biosynthesis; NAD(+) biosynthesis; NAD(+) from deamido-NAD(+) (L-Gln route): step 1/1. Catalyzes the ATP-dependent amidation of deamido-NAD to form NAD. Uses L-glutamine as a nitrogen source. The chain is Glutamine-dependent NAD(+) synthetase from Xylella fastidiosa (strain 9a5c).